Reading from the N-terminus, the 759-residue chain is MANSSLSQVLLMWKPGKIQKGPCSAEQQTLTSRLLRDTETCRRNFRNFPYPDVAGPRKALCQLRELCLKWLRPEVHSKEQILELLVLEQFLSILPGEVRTWVNSQYPESSEEVVALVEDLTQILEEEEAPQSSALPQDTPEDDPNHDPNPASQAGWLSDVVTKDLVTFNDVAVDITQEDWELMPPVQKELYKTVTLQNYWNMVSLGLTVYRPTVIPVLEEPWMVIKEIVEGPNPEWEPKAQAQCPAKHLPELKQDGTQTVKLEDSYDDDNDDSVESPPVCAFGMIHIDEEGFSVKSELSQEDPTEEYLSKCDIYRVTFEKHTNLGVQFDTQSDDKTALYNESKPPFSNASSGGAVRGKILPGDKPYSCNVCGKQFRKYPSLLAHRENHAKEKAYECEECGKEFKHLSSLIAHQRMHTGEKPYECHQCGKAFSQRAHLTIHQRIHTGEKPYKCEDCGKDFSQRAHLTIHQRTHTGEKPYKCLECSKTFSHSSSLINHQRVHTGEKPYICNECGKTFSQSTHLLQHQKIHTGKKPYKCNECWKVFSQSTYLIRHQRIHSGEKCYKCTACGKAFAHSSTLIQHQTTHTGEKSYICNVCGKAFSQSANLTQHHRTHTGEKPYKCSVCGKAFSQSVHLTQHQRIHNGEKPFKCNTCGKAYRQGANLTQHQRVHTGEKPYKCHHCGKAFIYSSSLNQHRRTHTGERPYKCSHCNKDFSQRTCLIQHQRIHTGEKPYGCRICGKAFTQSTNLIQHQRVHTGARHRN.

Residues 42 to 124 (RRNFRNFPYP…ALVEDLTQIL (83 aa)) enclose the SCAN box domain. The disordered stretch occupies residues 127-154 (EEAPQSSALPQDTPEDDPNHDPNPASQA). Residues 166–234 (VTFNDVAVDI…IKEIVEGPNP (69 aa)) enclose the KRAB domain. 14 C2H2-type zinc fingers span residues 366-388 (YSCNVCGKQFRKYPSLLAHRENH), 394-416 (YECEECGKEFKHLSSLIAHQRMH), 422-444 (YECHQCGKAFSQRAHLTIHQRIH), 450-472 (YKCEDCGKDFSQRAHLTIHQRTH), 478-500 (YKCLECSKTFSHSSSLINHQRVH), 506-528 (YICNECGKTFSQSTHLLQHQKIH), 534-556 (YKCNECWKVFSQSTYLIRHQRIH), 562-584 (YKCTACGKAFAHSSTLIQHQTTH), 590-612 (YICNVCGKAFSQSANLTQHHRTH), 618-640 (YKCSVCGKAFSQSVHLTQHQRIH), 646-668 (FKCNTCGKAYRQGANLTQHQRVH), 674-696 (YKCHHCGKAFIYSSSLNQHRRTH), 702-724 (YKCSHCNKDFSQRTCLIQHQRIH), and 730-752 (YGCRICGKAFTQSTNLIQHQRVH).

It belongs to the krueppel C2H2-type zinc-finger protein family. Expressed in brain and at low levels in kidney and spleen and few hematopoietic cell lines.

The protein resides in the nucleus. Functionally, may be involved in transcriptional regulation. This is Zinc finger protein 287 from Mus musculus (Mouse).